The sequence spans 273 residues: Large ribosomal subunit protein uL2 (273 aa).

Positions 228–273 (VDHPHGGGEGKTSGGRHPVTPWGFPTKGKKTRKNKRTSKFIVKKRK) are disordered. A compositionally biased stretch (basic residues) spans 254–273 (KGKKTRKNKRTSKFIVKKRK).

The protein belongs to the universal ribosomal protein uL2 family. In terms of assembly, part of the 50S ribosomal subunit. Forms a bridge to the 30S subunit in the 70S ribosome.

Its function is as follows. One of the primary rRNA binding proteins. Required for association of the 30S and 50S subunits to form the 70S ribosome, for tRNA binding and peptide bond formation. It has been suggested to have peptidyltransferase activity; this is somewhat controversial. Makes several contacts with the 16S rRNA in the 70S ribosome. In Rickettsia felis (strain ATCC VR-1525 / URRWXCal2) (Rickettsia azadi), this protein is Large ribosomal subunit protein uL2.